The primary structure comprises 301 residues: Small ribosomal subunit protein uS2 (301 aa).

This sequence belongs to the universal ribosomal protein uS2 family. In terms of assembly, component of the small ribosomal subunit. Mature ribosomes consist of a small (40S) and a large (60S) subunit. The 40S subunit contains about 33 different proteins and 1 molecule of RNA (18S). The 60S subunit contains about 49 different proteins and 3 molecules of RNA (28S, 5.8S and 5S). Interacts with ribosomal protein S21.

Its subcellular location is the cytoplasm. Functionally, required for the assembly and/or stability of the 40S ribosomal subunit. Required for the processing of the 20S rRNA-precursor to mature 18S rRNA in a late step of the maturation of 40S ribosomal subunits. The polypeptide is Small ribosomal subunit protein uS2 (Brugia malayi (Filarial nematode worm)).